A 447-amino-acid polypeptide reads, in one-letter code: N-succinylarginine dihydrolase (447 aa).

Substrate is bound by residues 19-28 (AGLSFGNEAS), asparagine 110, and 137-138 (HR). The active site involves glutamate 174. Arginine 212 is a binding site for substrate. The active site involves histidine 248. Positions 250 and 359 each coordinate substrate. Cysteine 365 functions as the Nucleophile in the catalytic mechanism.

The protein belongs to the succinylarginine dihydrolase family. As to quaternary structure, homodimer.

It catalyses the reaction N(2)-succinyl-L-arginine + 2 H2O + 2 H(+) = N(2)-succinyl-L-ornithine + 2 NH4(+) + CO2. Its pathway is amino-acid degradation; L-arginine degradation via AST pathway; L-glutamate and succinate from L-arginine: step 2/5. In terms of biological role, catalyzes the hydrolysis of N(2)-succinylarginine into N(2)-succinylornithine, ammonia and CO(2). This chain is N-succinylarginine dihydrolase, found in Salmonella arizonae (strain ATCC BAA-731 / CDC346-86 / RSK2980).